The chain runs to 476 residues: Replication factor C large subunit (476 aa).

Gly43–Thr50 contacts ATP. The disordered stretch occupies residues Leu435–Phe476.

It belongs to the activator 1 small subunits family. RfcL subfamily. In terms of assembly, heteromultimer composed of small subunits (RfcS) and large subunits (RfcL).

Functionally, part of the RFC clamp loader complex which loads the PCNA sliding clamp onto DNA. The protein is Replication factor C large subunit of Methanocorpusculum labreanum (strain ATCC 43576 / DSM 4855 / Z).